The chain runs to 225 residues: 3-dehydroquinate dehydratase (225 aa).

3-dehydroquinate contacts are provided by residues S6, 30-32, and R62; that span reads EWR. The active-site Proton donor/acceptor is H118. K143 functions as the Schiff-base intermediate with substrate in the catalytic mechanism. Residues R186, S205, and Q209 each contribute to the 3-dehydroquinate site.

The protein belongs to the type-I 3-dehydroquinase family. As to quaternary structure, homodimer.

It carries out the reaction 3-dehydroquinate = 3-dehydroshikimate + H2O. The protein operates within metabolic intermediate biosynthesis; chorismate biosynthesis; chorismate from D-erythrose 4-phosphate and phosphoenolpyruvate: step 3/7. Its function is as follows. Involved in the third step of the chorismate pathway, which leads to the biosynthesis of aromatic amino acids. Catalyzes the cis-dehydration of 3-dehydroquinate (DHQ) and introduces the first double bond of the aromatic ring to yield 3-dehydroshikimate. This is 3-dehydroquinate dehydratase from Streptococcus pneumoniae (strain Hungary19A-6).